Here is a 612-residue protein sequence, read N- to C-terminus: Netrin unc-6 (612 aa).

Positions 1–21 (MITSVLRYVLALYFCMGIAHG) are cleaved as a signal peptide. The Laminin N-terminal domain occupies 43-290 (RPVRCVPEFI…SMGELAVGGR (248 aa)). N114, N128, and N268 each carry an N-linked (GlcNAc...) asparagine glycan. A disulfide bridge connects residues C117 and C149. Cystine bridges form between C291/C300, C293/C310, C312/C321, C324/C344, C347/C356, C349/C374, C377/C386, C389/C407, C410/C422, C412/C429, C431/C440, C443/C457, C478/C547, and C494/C604. 3 Laminin EGF-like domains span residues 291–346 (CKCN…SCVA), 347–409 (CNCN…ACKS), and 410–459 (CGCH…PCIK). N-linked (GlcNAc...) asparagine glycosylation occurs at N368. The N-linked (GlcNAc...) asparagine glycan is linked to N423. Positions 478–604 (CSKCRIVPKR…FSKKDKLGQC (127 aa)) constitute an NTR domain. N564 is a glycosylation site (N-linked (GlcNAc...) asparagine).

As to quaternary structure, binds to unc-5 and unc-40 receptors.

Its subcellular location is the secreted. It is found in the extracellular space. The protein localises to the extracellular matrix. It localises to the basement membrane. Its function is as follows. Component of an extracellular matrix cue that guides dorsoventral migrations on the epidermis. Required for the guidance of pioneer axons and migrating cells along the body wall. In particular, it is required for the guidance of axons from neurons, including SubL neurons and AIY interneurons, into the nerve ring. During gonad morphogenesis, involved in distal tip cell (DTC) migration from the dorsal side of the hermaphrodite body to the midbody to allow for formation of gonad arms. Its association with either unc-40 or unc-5 receptors will lead to axon attraction or repulsion, respectively. Involved in dendritic morphogenesis; may act by association with unc-40 at the tips of growing dendrites for interaction with unc-5 on the apposing branch to induce mutual repulsion. Involved in the positioning of ray 1, the most anterior ray sensilium, in the male tail. Required for the formation of synapses between the AVA interneurons and the PHB sensory neurons. This is Netrin unc-6 from Caenorhabditis elegans.